Reading from the N-terminus, the 508-residue chain is Steroid 17-alpha-hydroxylase/17,20 lyase (508 aa).

Cys442 contributes to the heme binding site.

Belongs to the cytochrome P450 family. Heme is required as a cofactor.

It localises to the endoplasmic reticulum membrane. The protein resides in the microsome membrane. The enzyme catalyses a C21-steroid + reduced [NADPH--hemoprotein reductase] + O2 = a 17alpha-hydroxy-C21-steroid + oxidized [NADPH--hemoprotein reductase] + H2O + H(+). It carries out the reaction progesterone + reduced [NADPH--hemoprotein reductase] + O2 = 17alpha-hydroxyprogesterone + oxidized [NADPH--hemoprotein reductase] + H2O + H(+). It catalyses the reaction pregnenolone + reduced [NADPH--hemoprotein reductase] + O2 = 17alpha-hydroxypregnenolone + oxidized [NADPH--hemoprotein reductase] + H2O + H(+). The catalysed reaction is 17alpha-hydroxyprogesterone + reduced [NADPH--hemoprotein reductase] + O2 = androst-4-ene-3,17-dione + acetate + oxidized [NADPH--hemoprotein reductase] + H2O + 2 H(+). The enzyme catalyses 17alpha-hydroxyprogesterone + reduced [NADPH--hemoprotein reductase] + O2 = 16alpha,17alpha-dihydroxyprogesterone + oxidized [NADPH--hemoprotein reductase] + H2O + H(+). It carries out the reaction 16alpha,17alpha-dihydroxyprogesterone + reduced [NADPH--hemoprotein reductase] + O2 = 6beta,16alpha,17alpha-trihydroxyprogesterone + oxidized [NADPH--hemoprotein reductase] + H2O + H(+). It catalyses the reaction 17alpha-hydroxypregnenolone + reduced [NADPH--hemoprotein reductase] + O2 = 3beta-hydroxyandrost-5-en-17-one + acetate + oxidized [NADPH--hemoprotein reductase] + H2O + 2 H(+). The catalysed reaction is 16alpha,17alpha-dihydroxypregnenolone + reduced [NADPH--hemoprotein reductase] + O2 = 3beta,16alpha-dihydroxy-androst-5-en-17-one + acetate + oxidized [NADPH--hemoprotein reductase] + H2O + 2 H(+). The enzyme catalyses 3beta-hydroxyandrost-5-en-17-one + reduced [NADPH--hemoprotein reductase] + O2 = 3beta,16alpha-dihydroxy-androst-5-en-17-one + oxidized [NADPH--hemoprotein reductase] + H2O + H(+). It carries out the reaction androst-4-ene-3,17-dione + reduced [NADPH--hemoprotein reductase] + O2 = 16alpha-hydroxyandrost-4-ene-3,17-dione + oxidized [NADPH--hemoprotein reductase] + H2O + H(+). It participates in steroid hormone biosynthesis. It functions in the pathway steroid biosynthesis; glucocorticoid biosynthesis. With respect to regulation, regulated predominantly by intracellular cAMP levels. The 17,20-lyase activity is stimulated by cytochrome b5, which acts as an allosteric effector increasing the Vmax of the lyase activity. In terms of biological role, a cytochrome P450 monooxygenase involved in corticoid and androgen biosynthesis. Catalyzes 17-alpha hydroxylation of C21 steroids, which is common for both pathways. A second oxidative step, required only for androgen synthesis, involves an acyl-carbon cleavage. The 17-alpha hydroxy intermediates, as part of adrenal glucocorticoids biosynthesis pathway, are precursors of cortisol. Hydroxylates steroid hormones, pregnenolone and progesterone to form 17-alpha hydroxy metabolites, followed by the cleavage of the C17-C20 bond to form C19 steroids, dehydroepiandrosterone (DHEA) and androstenedione. Has 16-alpha hydroxylase activity. Catalyzes 16-alpha hydroxylation of 17-alpha hydroxy pregnenolone, followed by the cleavage of the C17-C20 bond to form 16-alpha-hydroxy DHEA. Also 16-alpha hydroxylates androgens, relevant for estriol synthesis. Mechanistically, uses molecular oxygen inserting one oxygen atom into a substrate, and reducing the second into a water molecule, with two electrons provided by NADPH via cytochrome P450 reductase (CPR; NADPH-ferrihemoprotein reductase). The protein is Steroid 17-alpha-hydroxylase/17,20 lyase (CYP17A1) of Cavia porcellus (Guinea pig).